The following is a 325-amino-acid chain: DNA-directed RNA polymerase subunit alpha (325 aa).

The interval 1–231 (MQTSLLKPKI…DQLSVFAALE (231 aa)) is alpha N-terminal domain (alpha-NTD). An alpha C-terminal domain (alpha-CTD) region spans residues 246–325 (IDPILLRPVD…ENWPPAGLDK (80 aa)).

It belongs to the RNA polymerase alpha chain family. Homodimer. The RNAP catalytic core consists of 2 alpha, 1 beta, 1 beta' and 1 omega subunit. When a sigma factor is associated with the core the holoenzyme is formed, which can initiate transcription.

The enzyme catalyses RNA(n) + a ribonucleoside 5'-triphosphate = RNA(n+1) + diphosphate. Its function is as follows. DNA-dependent RNA polymerase catalyzes the transcription of DNA into RNA using the four ribonucleoside triphosphates as substrates. This Burkholderia multivorans (strain ATCC 17616 / 249) protein is DNA-directed RNA polymerase subunit alpha.